A 93-amino-acid chain; its full sequence is Long neurotoxin 1 (93 aa).

Residues 1–21 (MKTLLLTLVVVTIVCLDLGNS) form the signal peptide. 5 disulfide bridges follow: Cys-24-Cys-42, Cys-35-Cys-63, Cys-48-Cys-52, Cys-67-Cys-78, and Cys-79-Cys-84.

Belongs to the three-finger toxin family. Long-chain subfamily. Type II alpha-neurotoxin sub-subfamily. As to expression, expressed by the venom gland.

The protein localises to the secreted. Binds with high affinity to muscular (alpha-1/CHRNA1) and neuronal (alpha-7/CHRNA7) nicotinic acetylcholine receptor (nAChR) and inhibits acetylcholine from binding to the receptor, thereby impairing neuromuscular and neuronal transmission. This Tropidechis carinatus (Australian rough-scaled snake) protein is Long neurotoxin 1.